A 554-amino-acid polypeptide reads, in one-letter code: uncharacterized protein (554 aa).

The disordered stretch occupies residues 1-25; that stretch reads MSSSIPPRLYDMSPTESKKQEDVSE. Position 13 is a phosphoserine (Ser-13). Transmembrane regions (helical) follow at residues 82–102, 120–140, 149–169, 171–191, 210–230, and 253–273; these read FFVA…TSLI, APYL…VWSL, WAFN…GASP, FASI…NLPV, VMSF…WGLI, and FLFT…LVSV. The residue at position 334 (Ser-334) is a Phosphoserine. Helical transmembrane passes span 364–384, 412–432, 437–457, 462–482, 497–517, and 525–545; these read LAIS…AFPL, SLIV…LVEF, KGTL…STTA, AYLG…GVLY, AVGL…VIAM, and APIF…VFFP.

This sequence belongs to the major facilitator superfamily.

It is found in the endoplasmic reticulum. Its subcellular location is the membrane. This is an uncharacterized protein from Schizosaccharomyces pombe (strain 972 / ATCC 24843) (Fission yeast).